A 371-amino-acid chain; its full sequence is Alginate lyase (371 aa).

A signal peptide spans 1-26 (MQSTDLKRLLIPSLLGLAIVTGSAQA). Substrate-binding positions include 67 to 68 (SK), 140 to 141 (HT), and tyrosine 258.

Belongs to the polysaccharide lyase 5 family.

It is found in the periplasm. The enzyme catalyses Eliminative cleavage of alginate to give oligosaccharides with 4-deoxy-alpha-L-erythro-hex-4-enuronosyl groups at their non-reducing ends and beta-D-mannuronate at their reducing end.. Catalyzes the depolymerization of alginate by cleaving the beta-1,4 glycosidic bond between two adjacent sugar residues via a beta-elimination mechanism. May serve to degrade mislocalized alginate that is trapped in the periplasmic space. In Pseudomonas fluorescens (strain ATCC BAA-477 / NRRL B-23932 / Pf-5), this protein is Alginate lyase.